A 237-amino-acid polypeptide reads, in one-letter code: uncharacterized protein (237 aa).

Residues 13 to 218 (VVGLSGGVAT…KSWKPYIFRV (206 aa)) enclose the DPCK domain. 18-25 (GGVATGKS) is an ATP binding site.

Belongs to the CoaE family.

This is an uncharacterized protein from Caenorhabditis elegans.